Consider the following 166-residue polypeptide: SsrA-binding protein (166 aa).

The interval 146–166 (KRAAEKEKQSKKDVKAAMERY) is disordered.

This sequence belongs to the SmpB family.

The protein localises to the cytoplasm. Its function is as follows. Required for rescue of stalled ribosomes mediated by trans-translation. Binds to transfer-messenger RNA (tmRNA), required for stable association of tmRNA with ribosomes. tmRNA and SmpB together mimic tRNA shape, replacing the anticodon stem-loop with SmpB. tmRNA is encoded by the ssrA gene; the 2 termini fold to resemble tRNA(Ala) and it encodes a 'tag peptide', a short internal open reading frame. During trans-translation Ala-aminoacylated tmRNA acts like a tRNA, entering the A-site of stalled ribosomes, displacing the stalled mRNA. The ribosome then switches to translate the ORF on the tmRNA; the nascent peptide is terminated with the 'tag peptide' encoded by the tmRNA and targeted for degradation. The ribosome is freed to recommence translation, which seems to be the essential function of trans-translation. This chain is SsrA-binding protein, found in Synechococcus sp. (strain CC9605).